Consider the following 465-residue polypeptide: Poly(A) polymerase I (465 aa).

Residues Asp-80, Asp-82, and Asp-162 contribute to the active site. A disordered region spans residues Ala-430–Val-465. Residues Arg-448–Pro-459 show a composition bias toward basic residues.

It belongs to the tRNA nucleotidyltransferase/poly(A) polymerase family.

It carries out the reaction RNA(n) + ATP = RNA(n)-3'-adenine ribonucleotide + diphosphate. Adds poly(A) tail to the 3' end of many RNAs, which usually targets these RNAs for decay. Plays a significant role in the global control of gene expression, through influencing the rate of transcript degradation, and in the general RNA quality control. The polypeptide is Poly(A) polymerase I (Salmonella typhimurium (strain LT2 / SGSC1412 / ATCC 700720)).